We begin with the raw amino-acid sequence, 209 residues long: MKPKIDYSIYLVTDRDLMSTETLEEAVEKAIIGGCTLIQLREKDCSSLDFYNTAVRVKEITDKHNIPLIINDRVDIALAVDAAGVHVGQSDIPAAIVRKVIGNDKILGVSTGSVNEALEAEKNGADYLGVGAMYSTGTKKDADSTSMNELRKIRENVSIPIVVIGGINKDRVKDFKGIGIDGLAIVSAIIAKEDITTAAKELKNEFIKI.

4-amino-2-methyl-5-(diphosphooxymethyl)pyrimidine is bound by residues 39-43 and N71; that span reads QLREK. Mg(2+) contacts are provided by D72 and D91. S110 is a binding site for 4-amino-2-methyl-5-(diphosphooxymethyl)pyrimidine. 136-138 contacts 2-[(2R,5Z)-2-carboxy-4-methylthiazol-5(2H)-ylidene]ethyl phosphate; sequence TGT. A 4-amino-2-methyl-5-(diphosphooxymethyl)pyrimidine-binding site is contributed by K139. 2-[(2R,5Z)-2-carboxy-4-methylthiazol-5(2H)-ylidene]ethyl phosphate-binding positions include G166 and 186–187; that span reads VS.

It belongs to the thiamine-phosphate synthase family. Mg(2+) is required as a cofactor.

The catalysed reaction is 2-[(2R,5Z)-2-carboxy-4-methylthiazol-5(2H)-ylidene]ethyl phosphate + 4-amino-2-methyl-5-(diphosphooxymethyl)pyrimidine + 2 H(+) = thiamine phosphate + CO2 + diphosphate. It catalyses the reaction 2-(2-carboxy-4-methylthiazol-5-yl)ethyl phosphate + 4-amino-2-methyl-5-(diphosphooxymethyl)pyrimidine + 2 H(+) = thiamine phosphate + CO2 + diphosphate. It carries out the reaction 4-methyl-5-(2-phosphooxyethyl)-thiazole + 4-amino-2-methyl-5-(diphosphooxymethyl)pyrimidine + H(+) = thiamine phosphate + diphosphate. It participates in cofactor biosynthesis; thiamine diphosphate biosynthesis; thiamine phosphate from 4-amino-2-methyl-5-diphosphomethylpyrimidine and 4-methyl-5-(2-phosphoethyl)-thiazole: step 1/1. Its function is as follows. Condenses 4-methyl-5-(beta-hydroxyethyl)thiazole monophosphate (THZ-P) and 2-methyl-4-amino-5-hydroxymethyl pyrimidine pyrophosphate (HMP-PP) to form thiamine monophosphate (TMP). The polypeptide is Thiamine-phosphate synthase (Clostridium beijerinckii (strain ATCC 51743 / NCIMB 8052) (Clostridium acetobutylicum)).